Consider the following 482-residue polypeptide: Magnesium-dependent glutamate N-prenyltransferase (482 aa).

Mg(2+)-binding residues include Asn351, Thr355, Glu359, and Phe366.

The protein belongs to the terpene synthase family. Requires Mg(2+) as cofactor.

It catalyses the reaction (2E)-geranyl diphosphate + L-glutamate = N-geranyl-L-glutamate + diphosphate. The protein operates within secondary metabolite biosynthesis. In terms of biological role, magnesium-dependent glutamate N-prenyltransferase: part of the gene cluster that mediates the biosynthesis of domoic acid (DA) and derivatives, natural products with neurochemical activity acting as ionotropic glutamate receptor (iGluR) agonists, thus being neurotoxins causing amnesic shellfish poisoning (ASP). Catalyzes the conversion of L-glutamic acid (L-Glu) to N-geranyl-L-glutamic acid (NGG) in the presence of geranyl diphosphate (GPP). Also able to catalyze the formation of farnesyl-L-glutamate from farnesyl diphosphate (FPP). Cannot use dimethylallyl diphosphate (DMAPP) as substrate. This Pseudo-nitzschia multiseries (Marine planktonic diatom) protein is Magnesium-dependent glutamate N-prenyltransferase.